The sequence spans 382 residues: ATP phosphoribosyltransferase regulatory subunit (382 aa).

This sequence belongs to the class-II aminoacyl-tRNA synthetase family. HisZ subfamily. As to quaternary structure, heteromultimer composed of HisG and HisZ subunits.

It localises to the cytoplasm. The protein operates within amino-acid biosynthesis; L-histidine biosynthesis; L-histidine from 5-phospho-alpha-D-ribose 1-diphosphate: step 1/9. Functionally, required for the first step of histidine biosynthesis. May allow the feedback regulation of ATP phosphoribosyltransferase activity by histidine. In Burkholderia pseudomallei (strain 668), this protein is ATP phosphoribosyltransferase regulatory subunit.